Consider the following 267-residue polypeptide: Putative metal-binding protein TM_0123 (267 aa).

A signal peptide spans 1–15; that stretch reads MKKILLLLVLIVAVL. The a divalent metal cation site is built by H53, H107, and H172.

This sequence belongs to the bacterial solute-binding protein 9 family.

Its subcellular location is the periplasm. Its function is as follows. Part of an ATP-binding cassette (ABC) transport system involved in metal import. Binds a metal with high affinity and specificity and delivers it to the membrane permease for translocation into the cytoplasm. In Thermotoga maritima (strain ATCC 43589 / DSM 3109 / JCM 10099 / NBRC 100826 / MSB8), this protein is Putative metal-binding protein TM_0123.